The sequence spans 47 residues: Large ribosomal subunit protein bL34 (47 aa).

It belongs to the bacterial ribosomal protein bL34 family.

The protein is Large ribosomal subunit protein bL34 of Mycobacterium avium (strain 104).